Here is a 226-residue protein sequence, read N- to C-terminus: Ribonuclease 3 (226 aa).

The RNase III domain maps to 5-127 (IFQRGDPIGH…IVAAIYLDCG (123 aa)). Glu-40 serves as a coordination point for Mg(2+). The active site involves Asp-44. Asp-113 and Glu-116 together coordinate Mg(2+). Glu-116 is an active-site residue. Positions 154–224 (DPKTRLQEWL…ATLVIAQLDS (71 aa)) constitute a DRBM domain.

The protein belongs to the ribonuclease III family. As to quaternary structure, homodimer. Mg(2+) is required as a cofactor.

It localises to the cytoplasm. The catalysed reaction is Endonucleolytic cleavage to 5'-phosphomonoester.. In terms of biological role, digests double-stranded RNA. Involved in the processing of primary rRNA transcript to yield the immediate precursors to the large and small rRNAs (23S and 16S). Processes some mRNAs, and tRNAs when they are encoded in the rRNA operon. Processes pre-crRNA and tracrRNA of type II CRISPR loci if present in the organism. This Xanthomonas oryzae pv. oryzae (strain KACC10331 / KXO85) protein is Ribonuclease 3.